We begin with the raw amino-acid sequence, 20 residues long: Short cationic peptide-4c (20 aa).

Residue Glu20 is modified to Glutamic acid 1-amide.

Expressed by the venom gland.

It localises to the secreted. This chain is Short cationic peptide-4c, found in Cupiennius salei (American wandering spider).